The chain runs to 70 residues: ATP synthase subunit c (70 aa).

Transmembrane regions (helical) follow at residues 4–24 (IAAG…DGIV) and 47–67 (FIGV…SLLV).

The protein belongs to the ATPase C chain family. In terms of assembly, F-type ATPases have 2 components, F(1) - the catalytic core - and F(0) - the membrane proton channel. F(1) has five subunits: alpha(3), beta(3), gamma(1), delta(1), epsilon(1). F(0) has three main subunits: a(1), b(2) and c(10-14). The alpha and beta chains form an alternating ring which encloses part of the gamma chain. F(1) is attached to F(0) by a central stalk formed by the gamma and epsilon chains, while a peripheral stalk is formed by the delta and b chains.

Its subcellular location is the cell membrane. Its function is as follows. F(1)F(0) ATP synthase produces ATP from ADP in the presence of a proton or sodium gradient. F-type ATPases consist of two structural domains, F(1) containing the extramembraneous catalytic core and F(0) containing the membrane proton channel, linked together by a central stalk and a peripheral stalk. During catalysis, ATP synthesis in the catalytic domain of F(1) is coupled via a rotary mechanism of the central stalk subunits to proton translocation. Key component of the F(0) channel; it plays a direct role in translocation across the membrane. A homomeric c-ring of between 10-14 subunits forms the central stalk rotor element with the F(1) delta and epsilon subunits. The sequence is that of ATP synthase subunit c from Pediococcus pentosaceus (strain ATCC 25745 / CCUG 21536 / LMG 10740 / 183-1w).